We begin with the raw amino-acid sequence, 223 residues long: Cytidylate kinase (223 aa).

Gly-12 to Thr-20 provides a ligand contact to ATP.

The protein belongs to the cytidylate kinase family. Type 1 subfamily.

The protein resides in the cytoplasm. The catalysed reaction is CMP + ATP = CDP + ADP. It carries out the reaction dCMP + ATP = dCDP + ADP. The polypeptide is Cytidylate kinase (Aster yellows witches'-broom phytoplasma (strain AYWB)).